The chain runs to 262 residues: MVRGPKKHLKRVAAPHHWLLDKLSGTYAPKPSPGPHKARECLPLIVFLRNRLKYALNGREVKAILMQRLIQVDGKVRTDSTFPTGFMDVISVEKTGEHFRLVYDIKGRFTVHRITAEEAKYKLCKVKRVQLGAKGVPFLVTHDGRTIRYPDPLIKVNDTIKLNLETNKIESFIKFDTSAQVMVTGGRNMGRVGTIVHREHHLGSFEIIHVKDALDREFATRLSNVFVIGEAGKSWISLPKGKGVKLSITEERDRRRALKGLA.

One can recognise an S4 RNA-binding domain in the interval 42-105 (LPLIVFLRNR…GEHFRLVYDI (64 aa)). At Ser-223 the chain carries Phosphoserine.

The protein belongs to the eukaryotic ribosomal protein eS4 family. Component of the small ribosomal subunit (SSU). Mature yeast ribosomes consist of a small (40S) and a large (60S) subunit. The 40S small subunit contains 1 molecule of ribosomal RNA (18S rRNA) and at least 33 different proteins. The large 60S subunit contains 3 rRNA molecules (25S, 5.8S and 5S rRNA) and at least 46 different proteins.

It is found in the cytoplasm. It localises to the nucleus. The protein resides in the nucleolus. Functionally, component of the ribosome, a large ribonucleoprotein complex responsible for the synthesis of proteins in the cell. The small ribosomal subunit (SSU) binds messenger RNAs (mRNAs) and translates the encoded message by selecting cognate aminoacyl-transfer RNA (tRNA) molecules. The large subunit (LSU) contains the ribosomal catalytic site termed the peptidyl transferase center (PTC), which catalyzes the formation of peptide bonds, thereby polymerizing the amino acids delivered by tRNAs into a polypeptide chain. The nascent polypeptides leave the ribosome through a tunnel in the LSU and interact with protein factors that function in enzymatic processing, targeting, and the membrane insertion of nascent chains at the exit of the ribosomal tunnel. The sequence is that of Small ribosomal subunit protein eS4B (rps402) from Schizosaccharomyces pombe (strain 972 / ATCC 24843) (Fission yeast).